The sequence spans 65 residues: Large ribosomal subunit protein bL35 (65 aa).

It belongs to the bacterial ribosomal protein bL35 family.

This is Large ribosomal subunit protein bL35 from Burkholderia ambifaria (strain MC40-6).